Here is a 132-residue protein sequence, read N- to C-terminus: Neurophysin 2 (132 aa).

7 disulfides stabilise this stretch: Cys10–Cys54, Cys13–Cys27, Cys21–Cys44, Cys28–Cys34, Cys61–Cys73, Cys67–Cys85, and Cys74–Cys79.

The protein belongs to the vasopressin/oxytocin family.

The protein localises to the secreted. Functionally, neurophysin 2 specifically binds vasopressin. The protein is Neurophysin 2 of Struthio camelus (Common ostrich).